The following is a 231-amino-acid chain: Ion-translocating oxidoreductase complex subunit E (231 aa).

6 consecutive transmembrane segments (helical) span residues 18-38 (ALVQ…ATNA), 39-59 (LGLG…ISTL), 63-83 (TPAE…VSAV), 86-106 (LINA…PLIV), 125-145 (ALSA…MFVL), and 182-202 (PFLL…MLAG).

It belongs to the NqrDE/RnfAE family. As to quaternary structure, the complex is composed of six subunits: RsxA, RsxB, RsxC, RsxD, RsxE and RsxG.

Its subcellular location is the cell inner membrane. Its function is as follows. Part of a membrane-bound complex that couples electron transfer with translocation of ions across the membrane. Required to maintain the reduced state of SoxR. In Escherichia coli O1:K1 / APEC, this protein is Ion-translocating oxidoreductase complex subunit E.